The primary structure comprises 189 residues: Protein C1orf43 homolog (189 aa).

The chain crosses the membrane as a helical span at residues 11–31 (VNVVLVMAYGSLVFVLLFIFV).

It localises to the membrane. The protein resides in the golgi apparatus. The protein localises to the mitochondrion. Functionally, general regulator of phagocytosis. Required to uptake Gram negative bacterium by macrophages. This is Protein C1orf43 homolog from Pongo abelii (Sumatran orangutan).